A 61-amino-acid chain; its full sequence is Small ribosomal subunit protein uS14B (61 aa).

4 residues coordinate Zn(2+): cysteine 24, cysteine 27, cysteine 40, and cysteine 43.

Belongs to the universal ribosomal protein uS14 family. Zinc-binding uS14 subfamily. As to quaternary structure, part of the 30S ribosomal subunit. Contacts proteins S3 and S10. Zn(2+) is required as a cofactor.

Binds 16S rRNA, required for the assembly of 30S particles and may also be responsible for determining the conformation of the 16S rRNA at the A site. The sequence is that of Small ribosomal subunit protein uS14B from Cutibacterium acnes (strain DSM 16379 / KPA171202) (Propionibacterium acnes).